The sequence spans 150 residues: Arginine repressor (150 aa).

Belongs to the ArgR family.

The protein resides in the cytoplasm. It functions in the pathway amino-acid biosynthesis; L-arginine biosynthesis [regulation]. Its function is as follows. Regulates arginine biosynthesis genes. The protein is Arginine repressor of Halothermothrix orenii (strain H 168 / OCM 544 / DSM 9562).